The following is a 564-amino-acid chain: O-fucosyltransferase 6 (564 aa).

The helical; Signal-anchor for type II membrane protein transmembrane segment at L17–I37 threads the bilayer. N-linked (GlcNAc...) asparagine glycosylation is found at N95 and N139. H277–R279 serves as a coordination point for substrate. N449 carries an N-linked (GlcNAc...) asparagine glycan. The segment covering M501–K512 has biased composition (basic and acidic residues). A disordered region spans residues M501–T542. The segment covering E513–D532 has biased composition (acidic residues). N540 carries an N-linked (GlcNAc...) asparagine glycan.

The protein belongs to the glycosyltransferase GT106 family.

Its subcellular location is the membrane. It functions in the pathway glycan metabolism. The polypeptide is O-fucosyltransferase 6 (Arabidopsis thaliana (Mouse-ear cress)).